Here is a 225-residue protein sequence, read N- to C-terminus: Large ribosomal subunit protein bL25 (225 aa).

Residues 206-225 (EDSKNKITKDNETNKDKSNL) are disordered.

It belongs to the bacterial ribosomal protein bL25 family. CTC subfamily. Part of the 50S ribosomal subunit; part of the 5S rRNA/L5/L18/L25 subcomplex. Contacts the 5S rRNA. Binds to the 5S rRNA independently of L5 and L18.

This is one of the proteins that binds to the 5S RNA in the ribosome where it forms part of the central protuberance. This Vesicomyosocius okutanii subsp. Calyptogena okutanii (strain HA) protein is Large ribosomal subunit protein bL25.